A 293-amino-acid polypeptide reads, in one-letter code: Acetylglutamate kinase (293 aa).

Residues 68-69 (GG), arginine 90, and asparagine 189 each bind substrate.

It belongs to the acetylglutamate kinase family. ArgB subfamily.

Its subcellular location is the cytoplasm. The enzyme catalyses N-acetyl-L-glutamate + ATP = N-acetyl-L-glutamyl 5-phosphate + ADP. It participates in amino-acid biosynthesis; L-arginine biosynthesis; N(2)-acetyl-L-ornithine from L-glutamate: step 2/4. Functionally, catalyzes the ATP-dependent phosphorylation of N-acetyl-L-glutamate. In Mycolicibacterium smegmatis (strain ATCC 700084 / mc(2)155) (Mycobacterium smegmatis), this protein is Acetylglutamate kinase.